The sequence spans 396 residues: Protein NDRG1-B (396 aa).

A disordered region spans residues 326–396; it reads RSRTGSAASS…NTPKSMEVSC (71 aa). Positions 327–340 are enriched in low complexity; the sequence is SRTGSAASSSSQDG. 4 tandem repeats follow at residues 340-349, 350-359, 360-369, and 370-379. A 4 X 10 AA tandem repeats of G-[NS]-R-S-R-[AS]-[HQ]-T-[DGN]-[DET] region spans residues 340 to 379; it reads GNRSRSHTNEGSRSRSQTGDGNRSRAHTGDGNRSRSHTDT. Over residues 366 to 377 the composition is skewed to basic and acidic residues; the sequence is HTGDGNRSRSHT. The span at 378-390 shows a compositional bias: polar residues; the sequence is DTNNVNSDHNTPK.

This sequence belongs to the NDRG family.

May be involved in pronephros development, after specification of the pronephros. This is Protein NDRG1-B (ndrg1-b) from Xenopus laevis (African clawed frog).